We begin with the raw amino-acid sequence, 631 residues long: Fusexin 1 (631 aa).

An N-terminal signal peptide occupies residues 1–19 (MRRAALILAFVLFIGLSSA). The tract at residues 20-90 (TVTSADSITY…THQDSKLKYS (71 aa)) is domain I N-terminus. Residues 20–537 (TVTSADSITY…NLFGGSGSGD (518 aa)) are Extracellular-facing. Residues 91–170 (TSTSDELRDI…KLATPAYIDN (80 aa)) are domain II N-terminus. Ca(2+)-binding residues include Asp112, Ser146, Tyr149, and Asp150. The cysteines at positions 125 and 155 are disulfide-linked. Residues 143-148 (SVTSPV) form a fusion loop, required for fusogenic activity, not required for membrane surface localization region. The domain I central section stretch occupies residues 171–224 (PDEIFTAKAELQAGDKTIQSATLSNGDAGDGTVTDLGDSKISWNGNLDLGASEP). The interval 225-316 (ENSRVIALYS…KDSSLDTGSF (92 aa)) is domain II C-terminus. Residues 317-348 (VYDTPELLSYPSFTVYVDAGENGYIEVTKPTG) form a domain I C-terminus region. The segment at 349–455 (DPDIISTSST…SVSVTGIQQS (107 aa)) is domain III. Cystine bridges form between Cys389–Cys432, Cys457–Cys477, and Cys490–Cys506. A disordered region spans residues 443–467 (DSTSVSVTGIQQSECNPGDQRREKN). The tract at residues 456–509 (ECNPGDQRREKNENDRWEIYTCQDNGLTYEYDVTCAEDEKAVAQGDNQFSCEKQ) is domain IV, required for fusogenic activity. The segment at 510–537 (DDDSGGGDNTGSDSGLFSNLFGGSGSGD) is stem. The helical transmembrane segment at 538–558 (LLTQVHTALSILAGLVAGFFG) threads the bilayer. The Cytoplasmic portion of the chain corresponds to 559 to 590 (YRGARWIHGETDIKGGFKLESRNVSRVKRGSP). A helical transmembrane segment spans residues 591 to 611 (VAGIVGAVLGFVVGYGVASVF). Residue His612 is a topological domain, extracellular. A helical transmembrane segment spans residues 613 to 630 (PVVQIIVVLGIAVGLYYF). A topological domain (cytoplasmic) is located at residue Arg631.

This sequence belongs to the HAP2/GCS1 family. Fusexin 1 subfamily. As to quaternary structure, monomer in solution, crystallizes as a trimer in high salt (2.5 M NaCl, 0.2 M CaCl(2)). The trimer is stabilized by interdomain contacts and numerous Ca(2+) and Na(+) ions.

The protein localises to the cell surface. It is found in the cell membrane. In terms of biological role, exhibits fusogenic activity. Mediates cell-cell fusion in mammalian cells when present in both cells (bilateral fusion). This is Fusexin 1 from Uncultured archaeon.